The following is an 87-amino-acid chain: Large ribosomal subunit protein bL27 (87 aa).

A disordered region spans residues 1–20 (MAHKKAGGSSRNGRDSESKR).

Belongs to the bacterial ribosomal protein bL27 family.

The chain is Large ribosomal subunit protein bL27 from Thiobacillus denitrificans (strain ATCC 25259 / T1).